Consider the following 261-residue polypeptide: Cytochrome c oxidase subunit 3 (261 aa).

Topologically, residues 1–15 (MAHQAHAYHMVDPSP) are mitochondrial matrix. The chain crosses the membrane as a helical span at residues 16–34 (WPLTGAIAALLLTSGTAVW). At 35–40 (FHFHSL) the chain is on the mitochondrial intermembrane side. A helical transmembrane segment spans residues 41 to 66 (TLLTMGNILLLLTMYQWWRDIIREGT). At 67–72 (FQGHHT) the chain is on the mitochondrial matrix side. Residues 73-105 (PPVQKGLRYGMILFITSEVFFFLGFFWAFYHSS) form a helical membrane-spanning segment. At 106–128 (LSPTPELGGCWPPTGIITLDPFE) the chain is on the mitochondrial intermembrane side. The chain crosses the membrane as a helical span at residues 129–152 (VPLLNTAVLLASGVTVTWAHHSIM). Residues 153–155 (EGE) are Mitochondrial matrix-facing. A helical membrane pass occupies residues 156–183 (RKQTIQALTLTILLGFYFTFLQGMEYYE). The Mitochondrial intermembrane portion of the chain corresponds to 184-190 (APFTIAD). The helical transmembrane segment at 191–223 (GVYGSTFFVATGFHGLHVIIGSTFLAICLLRQI) threads the bilayer. At 224–232 (QYHFTSEHH) the chain is on the mitochondrial matrix side. A helical membrane pass occupies residues 233 to 256 (FGFEAAAWYWHFVDVVWLFLYVSI). At 257-261 (YWWGS) the chain is on the mitochondrial intermembrane side.

The protein belongs to the cytochrome c oxidase subunit 3 family. As to quaternary structure, component of the cytochrome c oxidase (complex IV, CIV), a multisubunit enzyme composed of 14 subunits. The complex is composed of a catalytic core of 3 subunits MT-CO1, MT-CO2 and MT-CO3, encoded in the mitochondrial DNA, and 11 supernumerary subunits COX4I, COX5A, COX5B, COX6A, COX6B, COX6C, COX7A, COX7B, COX7C, COX8 and NDUFA4, which are encoded in the nuclear genome. The complex exists as a monomer or a dimer and forms supercomplexes (SCs) in the inner mitochondrial membrane with NADH-ubiquinone oxidoreductase (complex I, CI) and ubiquinol-cytochrome c oxidoreductase (cytochrome b-c1 complex, complex III, CIII), resulting in different assemblies (supercomplex SCI(1)III(2)IV(1) and megacomplex MCI(2)III(2)IV(2)).

It localises to the mitochondrion inner membrane. It carries out the reaction 4 Fe(II)-[cytochrome c] + O2 + 8 H(+)(in) = 4 Fe(III)-[cytochrome c] + 2 H2O + 4 H(+)(out). Component of the cytochrome c oxidase, the last enzyme in the mitochondrial electron transport chain which drives oxidative phosphorylation. The respiratory chain contains 3 multisubunit complexes succinate dehydrogenase (complex II, CII), ubiquinol-cytochrome c oxidoreductase (cytochrome b-c1 complex, complex III, CIII) and cytochrome c oxidase (complex IV, CIV), that cooperate to transfer electrons derived from NADH and succinate to molecular oxygen, creating an electrochemical gradient over the inner membrane that drives transmembrane transport and the ATP synthase. Cytochrome c oxidase is the component of the respiratory chain that catalyzes the reduction of oxygen to water. Electrons originating from reduced cytochrome c in the intermembrane space (IMS) are transferred via the dinuclear copper A center (CU(A)) of subunit 2 and heme A of subunit 1 to the active site in subunit 1, a binuclear center (BNC) formed by heme A3 and copper B (CU(B)). The BNC reduces molecular oxygen to 2 water molecules using 4 electrons from cytochrome c in the IMS and 4 protons from the mitochondrial matrix. This chain is Cytochrome c oxidase subunit 3 (mt-co3), found in Salmo salar (Atlantic salmon).